The following is a 352-amino-acid chain: Selenide, water dikinase (352 aa).

The active site involves cysteine 23. Residues lysine 26 and 54-56 contribute to the ATP site; that span reads SRD. Mg(2+) is bound at residue aspartate 57. Residues aspartate 74, aspartate 97, and 145–147 each bind ATP; that span reads GHS. Aspartate 97 serves as a coordination point for Mg(2+). Aspartate 233 is a Mg(2+) binding site.

It belongs to the selenophosphate synthase 1 family. Class I subfamily. In terms of assembly, homodimer. It depends on Mg(2+) as a cofactor.

The catalysed reaction is hydrogenselenide + ATP + H2O = selenophosphate + AMP + phosphate + 2 H(+). In terms of biological role, synthesizes selenophosphate from selenide and ATP. The chain is Selenide, water dikinase from Shewanella sp. (strain ANA-3).